The chain runs to 151 residues: Histone H2A.2.1 (151 aa).

Residue methionine 1 is modified to N-acetylmethionine. Disordered stretches follow at residues 1 to 22 (MDGS…KKSV) and 129 to 151 (EKAE…PKKA). Short sequence motifs (SPKK motif) lie at residues 140–143 (SPKK) and 147–150 (SPKK). The span at 140-151 (SPKKTTKSPKKA) shows a compositional bias: basic residues.

The protein belongs to the histone H2A family. As to quaternary structure, the nucleosome is a histone octamer containing two molecules each of H2A, H2B, H3 and H4 assembled in one H3-H4 heterotetramer and two H2A-H2B heterodimers. The octamer wraps approximately 147 bp of DNA. In terms of processing, phosphorylated within its C-terminal part, probably at the SPKK motifs.

It is found in the nucleus. Its subcellular location is the chromosome. Core component of nucleosome. Nucleosomes wrap and compact DNA into chromatin, limiting DNA accessibility to the cellular machineries which require DNA as a template. Histones thereby play a central role in transcription regulation, DNA repair, DNA replication and chromosomal stability. DNA accessibility is regulated via a complex set of post-translational modifications of histones, also called histone code, and nucleosome remodeling. The polypeptide is Histone H2A.2.1 (Triticum aestivum (Wheat)).